The chain runs to 125 residues: Holo-[acyl-carrier-protein] synthase (125 aa).

Mg(2+) is bound by residues Asp8 and Glu57.

Belongs to the P-Pant transferase superfamily. AcpS family. Requires Mg(2+) as cofactor.

Its subcellular location is the cytoplasm. It catalyses the reaction apo-[ACP] + CoA = holo-[ACP] + adenosine 3',5'-bisphosphate + H(+). Its function is as follows. Transfers the 4'-phosphopantetheine moiety from coenzyme A to a Ser of acyl-carrier-protein. This is Holo-[acyl-carrier-protein] synthase from Halothermothrix orenii (strain H 168 / OCM 544 / DSM 9562).